Here is a 155-residue protein sequence, read N- to C-terminus: Small ribosomal subunit protein uS7cz/uS7cy (155 aa).

It belongs to the universal ribosomal protein uS7 family. Part of the 30S ribosomal subunit.

The protein localises to the plastid. It localises to the chloroplast. One of the primary rRNA binding proteins, it binds directly to 16S rRNA where it nucleates assembly of the head domain of the 30S subunit. This Coffea arabica (Arabian coffee) protein is Small ribosomal subunit protein uS7cz/uS7cy (rps7-A).